Reading from the N-terminus, the 101-residue chain is uncharacterized protein (101 aa).

The protein localises to the cytoplasm. This is an uncharacterized protein from Saccharomyces cerevisiae (strain ATCC 204508 / S288c) (Baker's yeast).